Consider the following 887-residue polypeptide: Ubiquitin carboxyl-terminal hydrolase 4 (887 aa).

One can recognise a Rhodanese domain in the interval 202–328 (KEDSLLLIDV…WIKNGGEIDK (127 aa)). Disordered regions lie at residues 358–465 (AFPD…PKPP) and 484–505 (QKQNRSRSLEPQLPPIPSTLIR). The span at 387 to 402 (TPPNGSSTLGRINSPV) shows a compositional bias: polar residues. Residues 525–885 (VGLENMGNSC…SAYVLFYHRI (361 aa)) enclose the USP domain. Catalysis depends on C534, which acts as the Nucleophile. The Proton acceptor role is filled by H842.

The protein belongs to the peptidase C19 family.

It is found in the cytoplasm. It localises to the late endosome membrane. The enzyme catalyses Thiol-dependent hydrolysis of ester, thioester, amide, peptide and isopeptide bonds formed by the C-terminal Gly of ubiquitin (a 76-residue protein attached to proteins as an intracellular targeting signal).. RFU1 is an inhibitor of deubiquitination activity. Functionally, ubiquitin thioesterase that acts at the late endosome/prevacuolar compartment to recover ubiquitin from ubiquitinated membrane proteins en route to the vacuole. Also removes ubiquitin from soluble proteins targeted to proteasomes. Is essential to maintain a normal level of free ubiquitin. Required for promoting coordination of DNA replication and avoids DNA overreplication. The protein is Ubiquitin carboxyl-terminal hydrolase 4 (DOA4) of Candida glabrata (strain ATCC 2001 / BCRC 20586 / JCM 3761 / NBRC 0622 / NRRL Y-65 / CBS 138) (Yeast).